The following is a 139-amino-acid chain: MKKTAVLNAQLSGVIASLGHTDGLTICDAGLPIPSEQQCVDLALTKGIPSFLSTLEVVLTELFVERILLAEEIKQANPTIEQQLLEMINKLAQTQGRQIEIEYVVHSEFKQRSNQAKAVVRTGECSPYANVILYSGVPF.

Residue His-20 is the Proton donor of the active site. Substrate-binding positions include Asp-28, His-106, and 128-130 (YAN).

The protein belongs to the RbsD / FucU family. RbsD subfamily. In terms of assembly, homodecamer.

Its subcellular location is the cytoplasm. It catalyses the reaction beta-D-ribopyranose = beta-D-ribofuranose. It functions in the pathway carbohydrate metabolism; D-ribose degradation; D-ribose 5-phosphate from beta-D-ribopyranose: step 1/2. Functionally, catalyzes the interconversion of beta-pyran and beta-furan forms of D-ribose. This chain is D-ribose pyranase, found in Actinobacillus pleuropneumoniae serotype 7 (strain AP76).